Consider the following 496-residue polypeptide: Maturase K (496 aa).

This sequence belongs to the intron maturase 2 family. MatK subfamily.

Its subcellular location is the plastid. The protein localises to the chloroplast. Usually encoded in the trnK tRNA gene intron. Probably assists in splicing its own and other chloroplast group II introns. This chain is Maturase K, found in Paeonia officinalis (Common peony).